We begin with the raw amino-acid sequence, 254 residues long: 5'-nucleotidase SurE (254 aa).

Residues D8, D9, S40, and N93 each contribute to the a divalent metal cation site.

This sequence belongs to the SurE nucleotidase family. It depends on a divalent metal cation as a cofactor.

The protein resides in the cytoplasm. The catalysed reaction is a ribonucleoside 5'-phosphate + H2O = a ribonucleoside + phosphate. Functionally, nucleotidase that shows phosphatase activity on nucleoside 5'-monophosphates. The chain is 5'-nucleotidase SurE from Methylorubrum extorquens (strain CM4 / NCIMB 13688) (Methylobacterium extorquens).